Reading from the N-terminus, the 954-residue chain is Kinesin-like protein KIN-14Q (954 aa).

In terms of domain architecture, Calponin-homology (CH) spans 33–155; the sequence is AMRRYDAASW…CVLALKSFSE (123 aa). Residues 374–699 enclose the Kinesin motor domain; that stretch reads NIRVYCRVRP…LKFAERVASV (326 aa). 457–464 is an ATP binding site; the sequence is GQTGSGKT. The stretch at 704-733 forms a coiled coil; sequence AKANKEGSEVRELKEQIATLKAALAKKEGE. Basic and acidic residues predominate over residues 844–855; sequence YDPDKQRRRAEP. 2 disordered regions span residues 844–876 and 912–954; these read YDPD…DQEM and PNLA…NTPK. Over residues 864 to 873 the composition is skewed to low complexity; sequence FDAATSSPSD. Over residues 928–954 the composition is skewed to polar residues; it reads PIRNSKQLPFSTTGGRRTRNGKINTPK.

Belongs to the TRAFAC class myosin-kinesin ATPase superfamily. Kinesin family. KIN-14 subfamily. In terms of assembly, forms oligomers in vitro. Interacts with actin microfilaments. Binds to actin in vitro through its calponin-homology (CH) domain. In terms of tissue distribution, expressed in primary leaf, primary root, developing flower and coleoptile.

The protein resides in the cytoplasm. Its subcellular location is the cytoskeleton. Its activity is regulated as follows. The microtubule-dependent ATPase activity is regulated by actin binding. Minus end-directed motor protein that transports actin filaments along microtubules. Plays a central role in the polar orientation of actin filaments along microtubules, and thus a contribution to the organization of the cytoskeletal architecture. Links the actin microfilaments with the cortical microtubules in both cycling and non-cycling cells. Required for efficient cell elongation by its participation in the premitotic nuclear positioning. This Oryza sativa subsp. japonica (Rice) protein is Kinesin-like protein KIN-14Q.